The chain runs to 490 residues: Gallate decarboxylase (490 aa).

Asp165 provides a ligand contact to Mn(2+). Residues 168–170 (IHR) and Gly187 contribute to the prenylated FMN site. Glu233 contributes to the Mn(2+) binding site. Glu289 serves as the catalytic Proton acceptor.

Belongs to the UbiD family. Prenylated FMN is required as a cofactor. It depends on Mn(2+) as a cofactor.

The catalysed reaction is 3,4,5-trihydroxybenzoate + H(+) = 1,2,3-trihydroxybenzene + CO2. It carries out the reaction 3,4-dihydroxybenzoate + H(+) = catechol + CO2. In terms of biological role, involved in tannin degradation. Catalyzes the decarboxylation of gallic acid and protocatechuic acid to pyrogallol and catechol, respectively. This Lactiplantibacillus plantarum (strain ATCC BAA-793 / NCIMB 8826 / WCFS1) (Lactobacillus plantarum) protein is Gallate decarboxylase.